The chain runs to 276 residues: Large ribosomal subunit protein uL2 (276 aa).

The interval 203 to 276 (NVSSGKAGRT…SDKFIVKRRK (74 aa)) is disordered. Residues 210–220 (GRTRWLGRRPQ) are compositionally biased toward basic residues. Over residues 265-276 (KPSDKFIVKRRK) the composition is skewed to basic and acidic residues.

This sequence belongs to the universal ribosomal protein uL2 family. Part of the 50S ribosomal subunit. Forms a bridge to the 30S subunit in the 70S ribosome.

Functionally, one of the primary rRNA binding proteins. Required for association of the 30S and 50S subunits to form the 70S ribosome, for tRNA binding and peptide bond formation. It has been suggested to have peptidyltransferase activity; this is somewhat controversial. Makes several contacts with the 16S rRNA in the 70S ribosome. This chain is Large ribosomal subunit protein uL2, found in Coprothermobacter proteolyticus (strain ATCC 35245 / DSM 5265 / OCM 4 / BT).